The sequence spans 325 residues: Protein ORANGE-GREEN, chloroplastic (325 aa).

The N-terminal 54 residues, Met1–Ser54, are a transit peptide targeting the chloroplast. Over residues Ala53–Ser71 the composition is skewed to low complexity. Residues Ala53–Thr77 form a disordered region. The next 2 helical transmembrane spans lie at Leu164 to Ala184 and Ile217 to Val237. The interval Val226–His317 is CR-type-like. One copy of the CXXCXGXG motif repeat lies at Cys248–Gly255. A CXXCXXXG motif repeat occupies Cys259–Gly266. One copy of the CXXCXGXG motif repeat lies at Cys292–Gly299. Residues Cys303–Gly310 form a CXXCXXXG motif repeat.

The protein belongs to the orange-like family.

The protein localises to the plastid. It is found in the chloroplast membrane. Its function is as follows. Involved in chloroplast differentiation in fruit flesh. This is Protein ORANGE-GREEN, chloroplastic from Cucumis melo (Muskmelon).